The following is a 226-amino-acid chain: UPF0758 protein GK2618 (226 aa).

An MPN domain is found at 104 to 226; the sequence is VIRCPEDGAK…FISLKEKGYV (123 aa). Residues H175, H177, and D188 each contribute to the Zn(2+) site. The JAMM motif signature appears at 175 to 188; it reads HNHPSGDPTPSRED.

It belongs to the UPF0758 family.

The chain is UPF0758 protein GK2618 from Geobacillus kaustophilus (strain HTA426).